The chain runs to 428 residues: Cytochrome c biogenesis protein CcsB (428 aa).

Transmembrane regions (helical) follow at residues 14 to 34, 72 to 92, and 162 to 182; these read LRFA…GTFI, SFWF…CSFR, and IGPL…AYGS.

The protein belongs to the Ccs1/CcsB family. As to quaternary structure, may interact with CcsA.

It localises to the cellular thylakoid membrane. Functionally, required during biogenesis of c-type cytochromes (cytochrome c6 and cytochrome f) at the step of heme attachment. In Prochlorococcus marinus (strain AS9601), this protein is Cytochrome c biogenesis protein CcsB.